Reading from the N-terminus, the 125-residue chain is Large-conductance mechanosensitive channel (125 aa).

Helical transmembrane passes span 14 to 34 and 67 to 87; these read VIDL…VQSL and GSFL…FLIV.

The protein belongs to the MscL family. In terms of assembly, homopentamer.

It is found in the cell membrane. Its function is as follows. Channel that opens in response to stretch forces in the membrane lipid bilayer. May participate in the regulation of osmotic pressure changes within the cell. The protein is Large-conductance mechanosensitive channel of Lactobacillus helveticus (strain DPC 4571).